The primary structure comprises 445 residues: Damage suppressor protein (445 aa).

2 stretches are compositionally biased toward polar residues: residues 1–15 (MASTHQSSTEPSSTG) and 25–47 (SQGSGQDSKNVTVTKGTGSSATS). Disordered stretches follow at residues 1–145 (MAST…HSVI) and 203–445 (YHSV…RKRK). Over residues 61–73 (SSTTAGSSSTQGQ) the composition is skewed to low complexity. Over residues 74–87 (KFSTTPTDPKTFSS) the composition is skewed to polar residues. The segment covering 88–97 (DQKEKSKSPA) has biased composition (basic and acidic residues). Residues 117 to 138 (DAKSSGQSQGQSKDSGKSSSDS) show a composition bias toward low complexity. The segment covering 207 to 228 (VGDKTDDKKEGEHSGDKKDDSK) has biased composition (basic and acidic residues). The required and sufficient for DNA-binding and co-localization with nuclear DNA stretch occupies residues 208 to 445 (GDKTDDKKEG…GGKAGGRKRK (238 aa)). Polar residues predominate over residues 245–256 (ETSGQAESSSGN). Over residues 257 to 306 (EGAAPAKGRGRGRPPAAAKGVAKGAAKGAAASKGAKSGAESSKGGEQSSG) the composition is skewed to low complexity. Residues 329 to 338 (GEGGASGSEG) show a composition bias toward gly residues. The interval 360 to 445 (EPPRRSSRLT…GGKAGGRKRK (86 aa)) is required for nucleosome binding and for the protection of chromatin from hydroxyl radical-mediated DNA damage. A compositionally biased stretch (low complexity) spans 367 to 431 (RLTSSGTGAG…ASKAPQNGAG (65 aa)). Basic residues predominate over residues 432–445 (AKKKGGKAGGRKRK).

The protein resides in the nucleus. In terms of biological role, unique chromatin-associating protein that contributes to the organism's exceptional tolerance to harsh environmental stresses. Binds with a higher affinity to nucleosomes than to free DNA. Protects chromatin from damage caused by hydroxyl radical-mediated cleavage induced by X-rays or treatment with hydrogen peroxide. Suppresses X-ray-induced DNA damage that includes single-strand breaks (SSBs) as well as more hazardous double-strand breaks (DSBs), and improves radiotolerance. Also shields DNA against reactive oxygen species (ROS). The polypeptide is Damage suppressor protein (Ramazzottius varieornatus (Water bear)).